A 497-amino-acid polypeptide reads, in one-letter code: Glutamyl-tRNA reductase (497 aa).

Substrate contacts are provided by residues 58-61 (TCNR), S118, 123-125 (EQQ), and Q129. C59 functions as the Nucleophile in the catalytic mechanism. 214–219 (GAGAMA) contributes to the NADP(+) binding site. Polar residues predominate over residues 461-477 (VTQPGQADSSAAQTAGT). Residues 461–486 (VTQPGQADSSAAQTAGTSARADQIPS) form a disordered region.

This sequence belongs to the glutamyl-tRNA reductase family. As to quaternary structure, homodimer.

The enzyme catalyses (S)-4-amino-5-oxopentanoate + tRNA(Glu) + NADP(+) = L-glutamyl-tRNA(Glu) + NADPH + H(+). It functions in the pathway porphyrin-containing compound metabolism; protoporphyrin-IX biosynthesis; 5-aminolevulinate from L-glutamyl-tRNA(Glu): step 1/2. Its function is as follows. Catalyzes the NADPH-dependent reduction of glutamyl-tRNA(Glu) to glutamate 1-semialdehyde (GSA). This is Glutamyl-tRNA reductase from Corynebacterium jeikeium (strain K411).